Consider the following 145-residue polypeptide: Lysozyme-like protein 4 (145 aa).

The N-terminal stretch at 1–19 is a signal peptide; that stretch reads MKASVVLSLIGYLVVPSDT. Positions 20–145 constitute a C-type lysozyme domain; that stretch reads AVLGRCVVAK…LARWLDGCKL (126 aa). Cystine bridges form between Cys-25–Cys-143, Cys-49–Cys-130, Cys-84–Cys-95, and Cys-91–Cys-109. Glu-54 is an active-site residue.

It belongs to the glycosyl hydrolase 22 family. In terms of assembly, monomer.

It is found in the secreted. It localises to the cytoplasmic vesicle. The protein localises to the secretory vesicle. The protein resides in the acrosome. Its subcellular location is the cell projection. It is found in the cilium. It localises to the flagellum. May be involved in fertilization. Has no detectable bacteriolytic and lysozyme activities in vitro. The sequence is that of Lysozyme-like protein 4 (LYZL4) from Bos taurus (Bovine).